The primary structure comprises 708 residues: Probable GTP diphosphokinase RSH3, chloroplastic (708 aa).

2 disordered regions span residues 1-50 and 109-134; these read MSLP…AAGG and HSPV…SWLA. The transit peptide at 1–58 directs the protein to the chloroplast; that stretch reads MSLPAISLYTSPPPGAVYSSEFDPSSRGSSPPCSTAPPSTSHRPPAAAGGLSCLFSSP. 2 stretches are compositionally biased toward low complexity: residues 29-41 and 118-131; these read SSPP…PSTS and PSSS…PPAS. The 105-residue stretch at 233–337 folds into the HD domain; sequence YLQHCVETAV…IKLADRVHNM (105 aa).

This sequence belongs to the RelA/SpoT family.

It is found in the plastid. Its subcellular location is the chloroplast. The catalysed reaction is GTP + ATP = guanosine 3'-diphosphate 5'-triphosphate + AMP. Probable ppGpp (guanosine 3'-diphosphate 5'-diphosphate) synthetase that may be involved in a rapid plant ppGpp-mediated response to pathogens and other stresses. This is Probable GTP diphosphokinase RSH3, chloroplastic (RSH3) from Oryza sativa subsp. japonica (Rice).